Reading from the N-terminus, the 125-residue chain is Large ribosomal subunit protein bL12 (125 aa).

This sequence belongs to the bacterial ribosomal protein bL12 family. As to quaternary structure, homodimer. Part of the ribosomal stalk of the 50S ribosomal subunit. Forms a multimeric L10(L12)X complex, where L10 forms an elongated spine to which 2 to 4 L12 dimers bind in a sequential fashion. Binds GTP-bound translation factors.

Forms part of the ribosomal stalk which helps the ribosome interact with GTP-bound translation factors. Is thus essential for accurate translation. This chain is Large ribosomal subunit protein bL12, found in Granulibacter bethesdensis (strain ATCC BAA-1260 / CGDNIH1).